Here is a 627-residue protein sequence, read N- to C-terminus: Coiled-coil domain-containing protein 22 (627 aa).

Residues M1–R321 are sufficient for interaction with COMMD1. The segment at M1–S447 is sufficicient and required for interaction with CCDC93. A coiled-coil region spans residues R321–R384. A Phosphoserine modification is found at S410. The stretch at R448 to T535 forms a coiled coil.

The protein belongs to the CCDC22 family. In terms of assembly, component of the commander complex consisting of the CCC subcomplex and the retriever subcomplex. Component of the CCC (COMMD/CCDC22/CCDC93) subcomplex consisting of COMMD1, COMMD2, COMMD3, COMMD4, COMMD5, COMMD6, COMMD7, COMMD8, COMMD9, COMMD10, CCDC22 and CCDC93. Forms a coiled-coil heterodimer with CCDC22; this heterodimer interacts with the guanine nucleotide exchange factor DENND10; the interaction is direct. Interacts with CUL1, CUL2, CUL3, SKP1, BTRC. Interacts with SNX17 and SNX31. Interacts with CPNE1 and CPNE4.

It localises to the endosome. The protein localises to the cytoplasm. Its subcellular location is the cytoskeleton. It is found in the microtubule organizing center. The protein resides in the centrosome. Functionally, component of the commander complex that is essential for endosomal recycling of transmembrane cargos; the Commander complex is composed of composed of the CCC subcomplex and the retriever subcomplex. Component of the CCC complex, which is involved in the regulation of endosomal recycling of surface proteins, including integrins, signaling receptor and channels. Involved in regulation of NF-kappa-B signaling. Promotes ubiquitination of I-kappa-B-kinase subunit IKBKB and its subsequent proteasomal degradation leading to NF-kappa-B activation; the function may involve association with COMMD8 and a CUL1-dependent E3 ubiquitin ligase complex. May down-regulate NF-kappa-B activity via association with COMMD1 and involving a CUL2-dependent E3 ubiquitin ligase complex. Regulates the cellular localization of COMM domain-containing proteins, such as COMMD1 and COMMD10. Component of the CCC complex, which is involved in the regulation of endosomal recycling of surface proteins, including integrins, signaling receptor and channels. The CCC complex associates with SNX17, retriever and WASH complexes to prevent lysosomal degradation and promote cell surface recycling of numerous cargos such as integrins ITGA5:ITGB1. Plays a role in copper ion homeostasis. Involved in copper-dependent ATP7A trafficking between the trans-Golgi network and vesicles in the cell periphery; the function is proposed to depend on its association within the CCC complex and cooperation with the WASH complex on early endosomes. In Rattus norvegicus (Rat), this protein is Coiled-coil domain-containing protein 22.